The sequence spans 307 residues: Protein phosphatase EYA (307 aa).

The segment at 1–15 (MNNDTSKKLGTLVSD) is necessary for optimum phosphatase activity. Catalysis depends on D25, which acts as the Nucleophile. Mg(2+) is bound by residues D25, D27, and D253. D27 functions as the Proton donor in the catalytic mechanism.

The protein belongs to the HAD-like hydrolase superfamily. EYA family. Requires Mg(2+) as cofactor.

It carries out the reaction O-phospho-L-tyrosyl-[protein] + H2O = L-tyrosyl-[protein] + phosphate. Inhibited by EDTA. In terms of biological role, possesses phosphatase activity toward para-nitrophenyl phosphate (pNPP) in vitro. Possesses phosphatase activity toward several phosphotyrosine-containing peptides in vitro, with low peptide substrate specificity. The sequence is that of Protein phosphatase EYA from Arabidopsis thaliana (Mouse-ear cress).